The sequence spans 123 residues: uncharacterized protein (123 aa).

2 consecutive transmembrane segments (helical) span residues 1-21 (MVLP…AVGC) and 103-123 (LESS…ILLF).

The protein resides in the membrane. This is an uncharacterized protein from Saccharomyces cerevisiae (strain ATCC 204508 / S288c) (Baker's yeast).